The sequence spans 137 residues: PALPEDGGSGAFPPGHFKDPKRLYCKNGGFFLRIHPDGRVDGVREKSDPHIKLQLQAEERGVVSIKGVCANRYLAMKEDGRLLASKCVTDECFFFERLESNNYNTYRSRKYSSWYVALKRTGQYKLGSKTGPGQKAI.

A heparin-binding site is contributed by N27. The residue at position 73 (Y73) is a Phosphotyrosine; by TEC. Residue K86 forms a Glycyl lysine isopeptide (Lys-Gly) (interchain with G-Cter in SUMO1) linkage. Positions 119–135 are heparin-binding; sequence KRTGQYKLGSKTGPGQK.

This sequence belongs to the heparin-binding growth factors family. In terms of assembly, monomer. Homodimer. Interacts with FGFR1, FGFR2, FGFR3 and FGFR4. Affinity between fibroblast growth factors (FGFs) and their receptors is increased by heparan sulfate glycosaminoglycans that function as coreceptors. Interacts with CSPG4, FGFBP1 and TEC. Found in a complex with FGFBP1, FGF1 and FGF2. Interacts with FGFBP3. Interacts with integrin ITGAV:ITGB3; the interaction is required for FGF2 signaling. Interacts with SNORC (via the extracellular domain). Interacts with glypican GPC3. Post-translationally, phosphorylation at Tyr-73 regulates FGF2 unconventional secretion.

It is found in the secreted. It localises to the nucleus. Its function is as follows. Acts as a ligand for FGFR1, FGFR2, FGFR3 and FGFR4. Also acts as an integrin ligand which is required for FGF2 signaling. Binds to integrin ITGAV:ITGB3. Plays an important role in the regulation of cell survival, cell division, cell differentiation and cell migration. Functions as a potent mitogen in vitro. Can induce angiogenesis. Mediates phosphorylation of ERK1/2 and thereby promotes retinal lens fiber differentiation. The polypeptide is Fibroblast growth factor 2 (FGF2) (Oryctolagus cuniculus (Rabbit)).